Here is a 211-residue protein sequence, read N- to C-terminus: MQPRVVILDYGSGNLRSAQRAVARVGAHATISSDPHTALEADGLVVPGVGAFAACMRGLRALRGDRVIGKRLAGGRPVLGICVGMQILFERGVENDVVTEGCAEWPGTVERLDAPVIPHMGWNTVDAPAESAMFAGIDKDTRFYFVHSYGVRTWEMQTTSPHLKPPLVTWSTHGTPFVAAVENGPLWATQFHPEKSGDAGAQLLANWVATL.

In terms of domain architecture, Glutamine amidotransferase type-1 spans 4–211 (RVVILDYGSG…QLLANWVATL (208 aa)). The active-site Nucleophile is cysteine 82. Residues histidine 192 and glutamate 194 contribute to the active site.

Heterodimer of HisH and HisF.

It is found in the cytoplasm. The catalysed reaction is 5-[(5-phospho-1-deoxy-D-ribulos-1-ylimino)methylamino]-1-(5-phospho-beta-D-ribosyl)imidazole-4-carboxamide + L-glutamine = D-erythro-1-(imidazol-4-yl)glycerol 3-phosphate + 5-amino-1-(5-phospho-beta-D-ribosyl)imidazole-4-carboxamide + L-glutamate + H(+). It catalyses the reaction L-glutamine + H2O = L-glutamate + NH4(+). It participates in amino-acid biosynthesis; L-histidine biosynthesis; L-histidine from 5-phospho-alpha-D-ribose 1-diphosphate: step 5/9. Its function is as follows. IGPS catalyzes the conversion of PRFAR and glutamine to IGP, AICAR and glutamate. The HisH subunit catalyzes the hydrolysis of glutamine to glutamate and ammonia as part of the synthesis of IGP and AICAR. The resulting ammonia molecule is channeled to the active site of HisF. This Thermobifida fusca (strain YX) protein is Imidazole glycerol phosphate synthase subunit HisH.